The primary structure comprises 34 residues: Photosystem II reaction center protein M (34 aa).

Residues 7–27 (GFVATLLFVLVPAIFLIILYI) traverse the membrane as a helical segment.

The protein belongs to the PsbM family. In terms of assembly, PSII is composed of 1 copy each of membrane proteins PsbA, PsbB, PsbC, PsbD, PsbE, PsbF, PsbH, PsbI, PsbJ, PsbK, PsbL, PsbM, PsbT, PsbX, PsbY, PsbZ, Psb30/Ycf12, peripheral proteins PsbO, CyanoQ (PsbQ), PsbU, PsbV and a large number of cofactors. It forms dimeric complexes.

Its subcellular location is the cellular thylakoid membrane. In terms of biological role, one of the components of the core complex of photosystem II (PSII). PSII is a light-driven water:plastoquinone oxidoreductase that uses light energy to abstract electrons from H(2)O, generating O(2) and a proton gradient subsequently used for ATP formation. It consists of a core antenna complex that captures photons, and an electron transfer chain that converts photonic excitation into a charge separation. This subunit is found at the monomer-monomer interface. This chain is Photosystem II reaction center protein M, found in Synechococcus sp. (strain RCC307).